Reading from the N-terminus, the 144-residue chain is Maximins 11/H11 (144 aa).

Positions 1 to 18 (MNFKYIVAVSFLIASAYA) are cleaved as a signal peptide. A propeptide spanning residues 19–43 (RSEENDEQSLSQRDVLEEESLREIR) is cleaved from the precursor. Asn-70 carries the post-translational modification Asparagine amide. A propeptide spanning residues 74–123 (TAEDHEVMKRLEAVMRDLDSLDYPEEASERETRGFNQEEIANLFTKKEKR) is cleaved from the precursor. Ile-143 carries the isoleucine amide modification.

It belongs to the bombinin family. In terms of tissue distribution, expressed by the skin glands.

The protein localises to the secreted. In terms of biological role, maximin-11 shows antimicrobial activity against bacteria and against the fungus C.albicans. It has little hemolytic activity. Maximin-H11 shows antimicrobial activity against bacteria and against the fungus C.albicans. Shows strong hemolytic activity. This is Maximins 11/H11 from Bombina maxima (Giant fire-bellied toad).